A 101-amino-acid polypeptide reads, in one-letter code: MAKTSQVNRNKRREKMAARDAAKRAALKAIVNDRSLPVEDRFDATLKLAQLPRNGAKTRVRLRCELTGRARGNYRKFKLCRVALRDLASAGQIPGMVKSSW.

A disordered region spans residues 1 to 20; sequence MAKTSQVNRNKRREKMAARD.

Belongs to the universal ribosomal protein uS14 family. In terms of assembly, part of the 30S ribosomal subunit. Contacts proteins S3 and S10.

Its function is as follows. Binds 16S rRNA, required for the assembly of 30S particles and may also be responsible for determining the conformation of the 16S rRNA at the A site. The chain is Small ribosomal subunit protein uS14 from Acidiphilium cryptum (strain JF-5).